The following is a 251-amino-acid chain: ATP synthase subunit a (251 aa).

5 helical membrane passes run 28 to 48 (TDTV…AFFL), 84 to 104 (IAPF…ISNW), 130 to 150 (INYV…AGIW), 192 to 212 (IFAG…IMWA), and 220 to 240 (FDLF…ILYF).

It belongs to the ATPase A chain family. As to quaternary structure, F-type ATPases have 2 components, CF(1) - the catalytic core - and CF(0) - the membrane proton channel. CF(1) has five subunits: alpha(3), beta(3), gamma(1), delta(1), epsilon(1). CF(0) has three main subunits: a(1), b(2) and c(9-12). The alpha and beta chains form an alternating ring which encloses part of the gamma chain. CF(1) is attached to CF(0) by a central stalk formed by the gamma and epsilon chains, while a peripheral stalk is formed by the delta and b chains.

Its subcellular location is the cell membrane. Key component of the proton channel; it plays a direct role in the translocation of protons across the membrane. This is ATP synthase subunit a from Mycobacterium leprae (strain TN).